Consider the following 630-residue polypeptide: Very-long-chain aldehyde decarbonylase GL1-7 (630 aa).

Transmembrane regions (helical) follow at residues 93 to 113 (LYLD…YAII), 126 to 146 (GALI…YWFH), 185 to 205 (FLLF…SVLA), and 325 to 345 (VWYM…AWIY). A Fatty acid hydroxylase domain is found at 133–272 (LHMGPVEFLY…MPFYDYIYNT (140 aa)).

This sequence belongs to the sterol desaturase family. As to quaternary structure, homodimer. Expressed in panicles at low levels.

It localises to the endoplasmic reticulum membrane. The catalysed reaction is a long-chain fatty aldehyde + 2 NADPH + O2 + H(+) = a long-chain alkane + formate + 2 NADP(+) + H2O. Functionally, aldehyde decarbonylase involved in the conversion of aldehydes to alkanes. Core component of a very-long-chain alkane synthesis complex. This Oryza sativa subsp. japonica (Rice) protein is Very-long-chain aldehyde decarbonylase GL1-7.